The sequence spans 293 residues: Cell division protein FtsQ (293 aa).

Over 1-27 (MRPLMRNRASERGVDPAPSRWAWRMQR) the chain is Cytoplasmic. A helical membrane pass occupies residues 28–48 (LLLTPAFLLFLRAGVPVLVLF). Topologically, residues 49–293 (GAATWWLSDT…WWEIRQVSRQ (245 aa)) are periplasmic. Residues 81–149 (FMVQLMAVDG…GVLHIDVEPR (69 aa)) form the POTRA domain.

The protein belongs to the FtsQ/DivIB family. FtsQ subfamily.

It localises to the cell inner membrane. In terms of biological role, essential cell division protein. The sequence is that of Cell division protein FtsQ from Roseobacter litoralis (strain ATCC 49566 / DSM 6996 / JCM 21268 / NBRC 15278 / OCh 149).